We begin with the raw amino-acid sequence, 1372 residues long: MGQLTKKFGKIDVSLPIPHLLNLQVDSYVKFLQEGATERRHDEGLEGVFRSVFPIEDFNRTASLEFVSYEVGEPKYDQPECISKGLTYEAPIRIKVRLVVYDVDEDSGNRTIRDIKEQEIYFGTLPLMTEKGTFIINGTERVIVNQLQRSPGIIFEHDSGKTHSSRKVLYSCRIIPMRGSWLDFDFDHKDILYVRIDRRRKMPATILFKAMGMSKTDILDYFYKKEFYRLDPMGRLMWEVQKDMYRKDSAFVDIEDGKGGTIVKAGKPITKRAWRLISEAGLETIEVAPDTIEGMFLAEDIVNPATGEVLAEAADEITASLVENLREAGISRLPVLHTKGLETSSSLRDTLVLDKTPDMEAAQVEIYRRLRPSSPPTPEIAASFFDNLFRSADYYDLSPVGRYKLNQRLGIDQSVDLRTLTDDDILRAIRVLLHLKDSHGPADDIDHLGNRRVRPVGELVENQYRIGLVRMERAIKERMSLQEVSTLMPHDLINPKPVAAVLKEFFGTSQLSQFMDQTNALSEVTHKRRLSALGPGGLTRERAGFEVRDVHTSHYGRICPIETPEGPNIGLIVSLTTYAKVNDFGFIETPYRIIREGALTDEIKFLDASREQGEVVAQANAAVDADGKLADEYVTARVRGDVLMSHRDEVTLMDISPSQMVSISAALIPFLEHDDANRALMGSNMQRQAVPLLRSEKPIVGTGMEGDVARDSGACILAEGPGIVRYADATRIIVSYENGLYPDRGGVRAYDLQKYHKSNQNSCFGQRPTCHPGQIVKKGDVLADGPGIEDGELALGKNLVVAFMPWCGYNFEDSILISERVVKEDVFTSIHIEEFEVVARDTKLGPEEITRDIPNVGEDMLRNLDGSGIIRIGASVKPDDILVGKITPKGETQLTPEEKLLRAIFGDKARDVKNTSLKVPPGIEGTIIDVKVFNRRSGEKDERTRNIEDYETARIDKKEQDHVRALGDALRDRLADTLVGKQIAVTLPGKRKGEVLAEAGAPMTRELLDALPVKRLAGLFKSREVDEMVDTALEDYDRQVAFLKGIYDSKREKVTEGDDLPPGVIKMVKVHIAVKRKLNVGDKMAGRHGNKGVVSCILPEEDMPFFADGRPVDIVLNPLGVPSRMNIGQIMETHLGWGAKELGRQLAEMLDSGAAMATLRHEVKDVFRSATIAKLVDEMDDETFRKAVSKLRTGIVTKTPVFDGASEEDIWSWIERAGMDGDGKTVLYDGRTGDKFYNRVTTGVMYILKLHHLVDEKIHARSTGPYSLVTQQPLGGKAQFGGQRLGEMEVWALEAYGASYLLQEFLTVKSDDVTGRVKMYEKIVKGDNFLEAGLPESFNVLVKELMSLGLNVTLHQEEGKKRPKRVGFMSAL.

It belongs to the RNA polymerase beta chain family. In terms of assembly, the RNAP catalytic core consists of 2 alpha, 1 beta, 1 beta' and 1 omega subunit. When a sigma factor is associated with the core the holoenzyme is formed, which can initiate transcription.

It catalyses the reaction RNA(n) + a ribonucleoside 5'-triphosphate = RNA(n+1) + diphosphate. Its function is as follows. DNA-dependent RNA polymerase catalyzes the transcription of DNA into RNA using the four ribonucleoside triphosphates as substrates. The polypeptide is DNA-directed RNA polymerase subunit beta (Nitratidesulfovibrio vulgaris (strain ATCC 29579 / DSM 644 / CCUG 34227 / NCIMB 8303 / VKM B-1760 / Hildenborough) (Desulfovibrio vulgaris)).